The primary structure comprises 470 residues: Dynein axonemal assembly factor 11 (470 aa).

LRR repeat units follow at residues 20 to 43, 44 to 65, 66 to 89, and 90 to 110; these read IFSL…DKWC, RELK…VSKL, KKLE…GCES, and LQKL…NSLQ. The 19-residue stretch at 128 to 146 folds into the LRRCT domain; sequence YEGYRQYVVATLPQLKWLD. Positions 177 to 288 form a coiled coil; it reads LRKRAAEREK…NRSEEELKKK (112 aa). The interval 182–265 is disordered; it reads AEREKATNNL…SQYTPESRLE (84 aa). The segment covering 194-213 has biased composition (basic and acidic residues); it reads KQKEGRKAQEKKPGFDRRWY. Residues 303–395 form the CS domain; it reads VNESKLDFSL…TEMIQTKRAK (93 aa). Positions 447 to 470 are disordered; that stretch reads HRNSARDTADSEDFIDNAEVPPLV.

It belongs to the tilB family.

The protein localises to the cytoplasm. It is found in the cell projection. The protein resides in the cilium. Its subcellular location is the dynein axonemal particle. It localises to the flagellum. Its function is as follows. Involved in dynein arm assembly, is important for expression and transporting outer dynein arm (ODA) proteins from the cytoplasm to the cilia. The sequence is that of Dynein axonemal assembly factor 11 (dnaaf11) from Xenopus tropicalis (Western clawed frog).